The primary structure comprises 600 residues: Dihydroxy-acid dehydratase (600 aa).

D82 serves as a coordination point for Mg(2+). C123 provides a ligand contact to [2Fe-2S] cluster. Residues D124 and K125 each coordinate Mg(2+). K125 bears the N6-carboxylysine mark. Position 192 (C192) interacts with [2Fe-2S] cluster. E489 provides a ligand contact to Mg(2+). The active-site Proton acceptor is the S515.

This sequence belongs to the IlvD/Edd family. In terms of assembly, homodimer. It depends on [2Fe-2S] cluster as a cofactor. Requires Mg(2+) as cofactor.

It catalyses the reaction (2R)-2,3-dihydroxy-3-methylbutanoate = 3-methyl-2-oxobutanoate + H2O. The catalysed reaction is (2R,3R)-2,3-dihydroxy-3-methylpentanoate = (S)-3-methyl-2-oxopentanoate + H2O. It participates in amino-acid biosynthesis; L-isoleucine biosynthesis; L-isoleucine from 2-oxobutanoate: step 3/4. It functions in the pathway amino-acid biosynthesis; L-valine biosynthesis; L-valine from pyruvate: step 3/4. Functionally, functions in the biosynthesis of branched-chain amino acids. Catalyzes the dehydration of (2R,3R)-2,3-dihydroxy-3-methylpentanoate (2,3-dihydroxy-3-methylvalerate) into 2-oxo-3-methylpentanoate (2-oxo-3-methylvalerate) and of (2R)-2,3-dihydroxy-3-methylbutanoate (2,3-dihydroxyisovalerate) into 2-oxo-3-methylbutanoate (2-oxoisovalerate), the penultimate precursor to L-isoleucine and L-valine, respectively. This Bacteroides fragilis (strain YCH46) protein is Dihydroxy-acid dehydratase.